Here is a 233-residue protein sequence, read N- to C-terminus: Large ribosomal subunit protein uL1 (233 aa).

Belongs to the universal ribosomal protein uL1 family. Part of the 50S ribosomal subunit.

Its function is as follows. Binds directly to 23S rRNA. The L1 stalk is quite mobile in the ribosome, and is involved in E site tRNA release. In terms of biological role, protein L1 is also a translational repressor protein, it controls the translation of the L11 operon by binding to its mRNA. The sequence is that of Large ribosomal subunit protein uL1 from Geobacillus kaustophilus (strain HTA426).